A 562-amino-acid chain; its full sequence is Acetolactate synthase isozyme 1 large subunit (562 aa).

Position 60 (Glu-60) interacts with thiamine diphosphate. Residues Arg-162, 264-285 (HGVR…LGAR), and 307-326 (DIDR…IQAD) each bind FAD. Residues 393-473 (QHQMWTAQAY…VKIILMNNEA (81 aa)) are thiamine pyrophosphate binding. Residues Asp-444 and Asn-471 each contribute to the Mg(2+) site.

Belongs to the TPP enzyme family. Dimer of large and small chains. The cofactor is Mg(2+). Thiamine diphosphate is required as a cofactor.

The enzyme catalyses 2 pyruvate + H(+) = (2S)-2-acetolactate + CO2. Its pathway is amino-acid biosynthesis; L-isoleucine biosynthesis; L-isoleucine from 2-oxobutanoate: step 1/4. It functions in the pathway amino-acid biosynthesis; L-valine biosynthesis; L-valine from pyruvate: step 1/4. The chain is Acetolactate synthase isozyme 1 large subunit (ilvB) from Escherichia coli (strain K12).